The sequence spans 97 residues: MLCAIYKSARKAQTYLFVNKRDDFSSVPEGLMKTFGTPNLVTLINLATKDKLAMADLEKVKKNLIEKGFYLQLPPPQEDLLKEHKAAMAAEKEQGEL.

The 85-residue stretch at 1–85 (MLCAIYKSAR…PQEDLLKEHK (85 aa)) folds into the YcgL domain.

The polypeptide is YcgL domain-containing protein CPS_3517 (Colwellia psychrerythraea (strain 34H / ATCC BAA-681) (Vibrio psychroerythus)).